Here is a 204-residue protein sequence, read N- to C-terminus: uncharacterized protein (204 aa).

The helical transmembrane segment at 63-83 (SLLLSMVASVTAAGGNAAIVG) threads the bilayer.

The protein localises to the membrane. This is an uncharacterized protein from Mycobacterium tuberculosis (strain ATCC 25618 / H37Rv).